The sequence spans 420 residues: Serine/threonine-protein kinase PCRK2 (420 aa).

Residues 1–64 form a disordered region; the sequence is MKCFLFPLGD…SNTSMSAREN (64 aa). Residues 22–36 are compositionally biased toward polar residues; that stretch reads SPTSNFSDVNKSGSD. Positions 42-58 are enriched in low complexity; that stretch reads VSGTSTVSSTGRNSNTS. A Phosphothreonine modification is found at T70. The region spanning 81 to 366 is the Protein kinase domain; the sequence is FSRSGMIGEG…EVLEMVTKIV (286 aa). ATP-binding positions include 87–95 and K115; that span reads IGEGGFGCV. Y164 bears the Phosphotyrosine mark. The Proton acceptor role is filled by D215. 2 positions are modified to phosphoserine: S219 and S249. A phosphothreonine mark is found at T250 and T255. Y263 bears the Phosphotyrosine mark. The segment at 369–396 is disordered; it reads SSPGNGGKKPQLVPLKSQETSRVEEGKN. The span at 387–396 shows a compositional bias: basic and acidic residues; the sequence is ETSRVEEGKN.

Belongs to the protein kinase superfamily. Ser/Thr protein kinase family. As to quaternary structure, interacts with FLS2.

It localises to the cell membrane. It carries out the reaction L-seryl-[protein] + ATP = O-phospho-L-seryl-[protein] + ADP + H(+). The catalysed reaction is L-threonyl-[protein] + ATP = O-phospho-L-threonyl-[protein] + ADP + H(+). Functionally, functions redundantly with PCRK1 in basal resistance against bacterial pathogens and in regulation of plant immunity. Functions together with PCRK1 downstream of the pathogen-associated molecular pattern (PAMP) receptor FLS2. Contributes to the induction of SARD1 and CBP60G, which are transcriptional activator of ICS1, an enzyme involved in salicylate (SA) biosynthesis upon pathogen attack. The polypeptide is Serine/threonine-protein kinase PCRK2 (Arabidopsis thaliana (Mouse-ear cress)).